Consider the following 213-residue polypeptide: Superoxide dismutase [Mn] (213 aa).

The Mn(2+) site is built by His-27, His-82, Asp-168, and His-172.

The protein belongs to the iron/manganese superoxide dismutase family. In terms of assembly, homodimer. It depends on Mn(2+) as a cofactor.

It catalyses the reaction 2 superoxide + 2 H(+) = H2O2 + O2. In terms of biological role, destroys superoxide anion radicals which are normally produced within the cells and which are toxic to biological systems. In Mannheimia haemolytica (Pasteurella haemolytica), this protein is Superoxide dismutase [Mn] (sodA).